The chain runs to 192 residues: MNGGFYLQHRELCPACNRIALRVCEYMEPYPRVEAFCECCGYKAYDVPMKLDKETVYRILDKLSRKEIGAVCIDDRCGSTDIVKLLREGTYAEFRCLDCGAEWNSYEVKEAIKRVKNVLNYLKDGSRLAEVLKAQEGECPLCGWDIGHAHEGYLVEIQCYVCGYHNEYKEEFPKEIPPEDACPQFPRAEETG.

This is an uncharacterized protein from Aquifex aeolicus (strain VF5).